Consider the following 154-residue polypeptide: MATFSQKPAEVEKKWVIIDAEGLVVGRLASIIAMRLRGKHKATFTPHVDDGDNVIVINADKVVFTGKKYSDKVYYWHTGYAGGIKERTARQIIEGRFPERVLEKAVERMVPRGPLGRRQMKNLRVYAGSNHPHEAQQPVALDVAALNKKNVRSA.

This sequence belongs to the universal ribosomal protein uL13 family. In terms of assembly, part of the 50S ribosomal subunit.

In terms of biological role, this protein is one of the early assembly proteins of the 50S ribosomal subunit, although it is not seen to bind rRNA by itself. It is important during the early stages of 50S assembly. This chain is Large ribosomal subunit protein uL13, found in Rhizobium etli (strain CIAT 652).